Here is a 282-residue protein sequence, read N- to C-terminus: Trans,polycis-polyprenyl diphosphate synthase ((2Z,6E)-farnesyl diphosphate specific) (282 aa).

A disordered region spans residues 1 to 30 (MSPKTVFSTDTHREPIPPQPHPSGARPPQL). Asp-44 is an active-site residue. Residue Asp-44 coordinates Mg(2+). Substrate contacts are provided by residues 45–48 (GNGR), Trp-49, Arg-57, His-61, and 89–91 (STE). Residue Asn-92 is the Proton acceptor of the active site. Residues Trp-93, Arg-95, Arg-212, and 218 to 220 (RLS) each bind substrate. Glu-231 serves as a coordination point for Mg(2+). The interval 262–282 (GGAEPNPVGPPQSAAGAQGQD) is disordered.

The protein belongs to the UPP synthase family. As to quaternary structure, homodimer. Mg(2+) is required as a cofactor.

The catalysed reaction is (2Z,6E)-farnesyl diphosphate + 10 isopentenyl diphosphate = di-trans,deca-cis-tridecaprenyl diphosphate + 10 diphosphate. The enzyme catalyses (2Z,6E)-farnesyl diphosphate + 11 isopentenyl diphosphate = di-trans,undeca-cis-tetradecaprenyl diphosphate + 11 diphosphate. It carries out the reaction (2Z,6E)-farnesyl diphosphate + 9 isopentenyl diphosphate = di-trans,nona-cis-dodecaprenyl diphosphate + 9 diphosphate. Functionally, catalyzes the synthesis of Z,E-mixed prenyl diphosphates by a condensation of isopentenyl diphosphate to an allylic diphosphate. It shows a large substrate specificity accepting dimethylallyl diphosphate (DMAPP), GPP, E,Efarnesyl diphosphate (FPP), E,E,E-geranylgeranyl diphosphate (GGPP), neryl diphosphate (Z-GPP), and (2Z,6E)-farnesyl diphosphate (Z,E-FPP) as allylic substrates. The enzyme exhibits the highest activity when Z,E-FPP is employed as an allylic substrate. The major product is dodecaprenyl diphosphate (C60) under every allylic substrate conditions, but the enzyme is also able to synthesize even C70 prenyl diphosphate as the maximum chain-length product. This chain is Trans,polycis-polyprenyl diphosphate synthase ((2Z,6E)-farnesyl diphosphate specific), found in Thermobifida fusca (strain YX).